A 214-amino-acid chain; its full sequence is Protein DEHYDRATION-INDUCED 19 homolog 5 (214 aa).

Serine 110 is modified (phosphoserine). Residues 148–185 form a disordered region; the sequence is PKKSKLVQPDSSSEASMEDNSLIRDSTEKDWESPSPLS. Residues 156 to 166 are compositionally biased toward polar residues; that stretch reads PDSSSEASMED. Basic and acidic residues predominate over residues 168-179; it reads SLIRDSTEKDWE.

The protein belongs to the Di19 family. Post-translationally, phosphorylated in vitro by CPK3 or CPK11. As to expression, expressed in seedlings, roots, leaves, stems, flowers and siliques.

Its subcellular location is the nucleus. The polypeptide is Protein DEHYDRATION-INDUCED 19 homolog 5 (DI19-5) (Arabidopsis thaliana (Mouse-ear cress)).